We begin with the raw amino-acid sequence, 184 residues long: Transmembrane protein 220 (184 aa).

Transmembrane regions (helical) follow at residues 30–50, 54–74, 82–102, 121–137, and 149–169; these read LWRICNFIMFGFFSLAAYVQI, DAEMWIVIYMIPAVLILFVSI, VIWKLLADLHSAVCAVGAIYL, RELSGLLIISGWLLLCR, and LIIAISVSTAPFFIWIYIYID.

It is found in the membrane. The polypeptide is Transmembrane protein 220 (tmem220) (Xenopus laevis (African clawed frog)).